A 287-amino-acid polypeptide reads, in one-letter code: MIVSAMEKAEILVEALPYIKDFYGRRVVIKYGGAAMTDCELKQKVMQDIVLMKFVGMHPIVVHGGGPEINQMLSRLGIQSEFVNGFRVTDAATMEIVEMVLGGKVNKEIVAGIHASGGKAVGISGKDGMLIQAHPADGSGKMGFVGEVQYVNPELIEKVIENGYIPVIAPIGIGEDQQSYNINADLVAAAIAVSMKADKLVLLTDVPGLMMNPADSNSLISVLKVSEVENYVQEGIIAGGMVPKVQCCVEAVTGGVGRTHIIDGRVPHSILLEIFTDEGIGTMVVNE.

Substrate-binding positions include 65-66, R87, and N181; that span reads GG.

It belongs to the acetylglutamate kinase family. ArgB subfamily.

The protein resides in the cytoplasm. It catalyses the reaction N-acetyl-L-glutamate + ATP = N-acetyl-L-glutamyl 5-phosphate + ADP. Its pathway is amino-acid biosynthesis; L-arginine biosynthesis; N(2)-acetyl-L-ornithine from L-glutamate: step 2/4. Its function is as follows. Catalyzes the ATP-dependent phosphorylation of N-acetyl-L-glutamate. In Syntrophomonas wolfei subsp. wolfei (strain DSM 2245B / Goettingen), this protein is Acetylglutamate kinase.